The sequence spans 157 residues: Cyclic pyranopterin monophosphate synthase (157 aa).

Substrate contacts are provided by residues 74 to 76 and 112 to 113; these read MCH and ME. Aspartate 127 is a catalytic residue.

The protein belongs to the MoaC family. As to quaternary structure, homohexamer; trimer of dimers.

The catalysed reaction is (8S)-3',8-cyclo-7,8-dihydroguanosine 5'-triphosphate = cyclic pyranopterin phosphate + diphosphate. The protein operates within cofactor biosynthesis; molybdopterin biosynthesis. Its function is as follows. Catalyzes the conversion of (8S)-3',8-cyclo-7,8-dihydroguanosine 5'-triphosphate to cyclic pyranopterin monophosphate (cPMP). This Campylobacter jejuni subsp. doylei (strain ATCC BAA-1458 / RM4099 / 269.97) protein is Cyclic pyranopterin monophosphate synthase.